Reading from the N-terminus, the 58-residue chain is Metallothionein-1 (58 aa).

The segment at 1 to 28 (PGPCCNDKCVCKEGGCKEGCQCTSCRCS) is beta. A divalent metal cation-binding residues include Cys4, Cys5, Cys9, Cys11, Cys16, Cys20, Cys22, Cys25, Cys27, Cys30, Cys33, Cys37, Cys39, Cys45, Cys49, Cys53, Cys55, and Cys56. The segment at 29–58 (PCEKCSSGCKCANKEECSKTCSKACSCCPT) is alpha.

The protein belongs to the metallothionein superfamily. Type 3 family.

In terms of biological role, metallothioneins have a high content of cysteine residues that bind various heavy metals. Class I MTS in marine crustacea are involved in the sequestration of elevated levels of heavy-metal ions. This chain is Metallothionein-1, found in Scylla serrata (Mud crab).